The sequence spans 439 residues: Vacuolar zinc transporter COT1 (439 aa).

Over M1–K9 the chain is Cytoplasmic. The helical transmembrane segment at I10 to L30 threads the bilayer. Over S31–S33 the chain is Vacuolar. The helical transmembrane segment at L34–L54 threads the bilayer. The Cytoplasmic segment spans residues W55 to A76. The chain crosses the membrane as a helical span at residues E77–I97. Topologically, residues E98 to K113 are vacuolar. The chain crosses the membrane as a helical span at residues F114–H134. Topologically, residues D135 to V244 are cytoplasmic. 3 consecutive short sequence motifs (histidine repeat) follow at residues H140–H144, H165–H169, and S219–I223. Polar residues predominate over residues P207 to T230. Residues P207–E231 form a disordered region. Residue S225 is modified to Phosphoserine. A helical transmembrane segment spans residues F245–I265. Topologically, residues W266–Y274 are vacuolar. Residues Y275–L295 traverse the membrane as a helical segment. Residues S296–H439 are Cytoplasmic-facing. Residue K301 forms a Glycyl lysine isopeptide (Lys-Gly) (interchain with G-Cter in ubiquitin) linkage. The span at T388 to Q402 shows a compositional bias: basic and acidic residues. The segment at T388 to L408 is disordered.

Belongs to the cation diffusion facilitator (CDF) transporter (TC 2.A.4) family. SLC30A subfamily.

Its subcellular location is the vacuole membrane. It carries out the reaction Zn(2+)(in) = Zn(2+)(out). In terms of biological role, vacuolar transporter that regulates zinc homeostasis by mediating zinc transport and storage into the vacuole. Plays a role in resistance to zinc shock resulting from sudden influx of zinc into cytoplasm. May also participate in the regulation of cobalt levels under normal physiological conditions and may be important in the supply of metal that is required for metalloenzyme or cofactor synthesis. Involved in the resistance to cobalt and rhodium ions. The chain is Vacuolar zinc transporter COT1 from Saccharomyces cerevisiae (strain ATCC 204508 / S288c) (Baker's yeast).